The sequence spans 295 residues: Pyridoxal 5'-phosphate synthase subunit PdxS (295 aa).

D25 contributes to the D-ribose 5-phosphate binding site. The Schiff-base intermediate with D-ribose 5-phosphate role is filled by K82. G154 is a binding site for D-ribose 5-phosphate. Residue R166 coordinates D-glyceraldehyde 3-phosphate. D-ribose 5-phosphate contacts are provided by residues G215 and 236-237; that span reads GS.

This sequence belongs to the PdxS/SNZ family. In the presence of PdxT, forms a dodecamer of heterodimers.

The catalysed reaction is aldehydo-D-ribose 5-phosphate + D-glyceraldehyde 3-phosphate + L-glutamine = pyridoxal 5'-phosphate + L-glutamate + phosphate + 3 H2O + H(+). The protein operates within cofactor biosynthesis; pyridoxal 5'-phosphate biosynthesis. Its function is as follows. Catalyzes the formation of pyridoxal 5'-phosphate from ribose 5-phosphate (RBP), glyceraldehyde 3-phosphate (G3P) and ammonia. The ammonia is provided by the PdxT subunit. Can also use ribulose 5-phosphate and dihydroxyacetone phosphate as substrates, resulting from enzyme-catalyzed isomerization of RBP and G3P, respectively. The sequence is that of Pyridoxal 5'-phosphate synthase subunit PdxS from Staphylococcus epidermidis (strain ATCC 35984 / DSM 28319 / BCRC 17069 / CCUG 31568 / BM 3577 / RP62A).